A 162-amino-acid polypeptide reads, in one-letter code: Large ribosomal subunit protein uL15 (162 aa).

The span at 1-18 (MKLNEIRDNEGATKDRMR) shows a compositional bias: basic and acidic residues. A disordered region spans residues 1 to 42 (MKLNEIRDNEGATKDRMRVGRGIGSGKGKTAGRGVKGQKART). Over residues 21 to 35 (RGIGSGKGKTAGRGV) the composition is skewed to gly residues.

This sequence belongs to the universal ribosomal protein uL15 family. As to quaternary structure, part of the 50S ribosomal subunit.

Binds to the 23S rRNA. In Methylobacterium sp. (strain 4-46), this protein is Large ribosomal subunit protein uL15.